We begin with the raw amino-acid sequence, 235 residues long: Aspartate/glutamate leucyltransferase (235 aa).

Belongs to the R-transferase family. Bpt subfamily.

It localises to the cytoplasm. It carries out the reaction N-terminal L-glutamyl-[protein] + L-leucyl-tRNA(Leu) = N-terminal L-leucyl-L-glutamyl-[protein] + tRNA(Leu) + H(+). The catalysed reaction is N-terminal L-aspartyl-[protein] + L-leucyl-tRNA(Leu) = N-terminal L-leucyl-L-aspartyl-[protein] + tRNA(Leu) + H(+). Functions in the N-end rule pathway of protein degradation where it conjugates Leu from its aminoacyl-tRNA to the N-termini of proteins containing an N-terminal aspartate or glutamate. This Shewanella putrefaciens (strain CN-32 / ATCC BAA-453) protein is Aspartate/glutamate leucyltransferase.